The sequence spans 308 residues: Mitochondrial import receptor subunit TOM40B (308 aa).

Positions 1–29 (MGNTLGLAPMGTLPRRSHRREEPLPNPGS) are disordered. Positions 281 to 308 (PLPVTLALGAFLNHWRNRFHCGFSITVG) are required for mitochondrial targeting.

This sequence belongs to the Tom40 family. In terms of assembly, forms part of the preprotein translocase of the outer mitochondrial membrane (TOM complex) containing TOMM22, TOMM40, TOMM40L and TOMM70. Interacts with mitochondrial targeting sequences.

It is found in the mitochondrion outer membrane. In terms of biological role, potential channel-forming protein implicated in import of protein precursors into mitochondria. This chain is Mitochondrial import receptor subunit TOM40B (Tomm40l), found in Mus musculus (Mouse).